Here is a 363-residue protein sequence, read N- to C-terminus: Probable matrix metalloproteinase 095L (363 aa).

An N-terminal signal peptide occupies residues 1–25; sequence MSVDSFTSRLAVVMTAVVLVWWAQA. Positions 26–126 are cleaved as a propeptide — activation peptide; that stretch reads LPVPSPRRGE…PRCGVPDVSK (101 aa). A Cysteine switch motif is present at residues 117–124; that stretch reads PRCGVPDV. Zn(2+) is bound by residues cysteine 119 and histidine 275. Residue glutamate 276 is part of the active site. 2 residues coordinate Zn(2+): histidine 279 and histidine 285.

The protein belongs to the peptidase M10A family. Requires Zn(2+) as cofactor.

It is found in the secreted. In terms of biological role, probable endopeptidase. The sequence is that of Probable matrix metalloproteinase 095L from Aedes vexans (Inland floodwater mosquito).